The chain runs to 107 residues: Protein Rev (107 aa).

Phosphoserine; by host CK2 occurs at positions 5 and 8. The homomultimerization stretch occupies residues Ile18–Asn26. Disordered stretches follow at residues Asn26 to Arg48 and Leu81 to Pro107. The Nuclear localization signal and RNA-binding (RRE) motif lies at Thr34–Arg50. Positions Gln36–Arg48 are enriched in basic residues. Residues Leu73 to Asp84 carry the Nuclear export signal and binding to XPO1 motif. The segment covering Ser89–Thr101 has biased composition (low complexity). Ser92 carries the phosphoserine; by host modification.

The protein belongs to the HIV-1 REV protein family. As to quaternary structure, homomultimer; when bound to the RRE. Multimeric assembly is essential for activity and may involve XPO1. Binds to human KPNB1, XPO1, TNPO1, RANBP5 and IPO7. Interacts with the viral Integrase. Interacts with human KHDRBS1. Interacts with human NAP1; this interaction decreases Rev multimerization and stimulates its activity. Interacts with human DEAD-box helicases DDX3 and DDX24; these interactions may serve for viral RNA export to the cytoplasm and packaging, respectively. Interacts with human PSIP1; this interaction may inhibit HIV-1 DNA integration by promoting dissociation of the Integrase-LEDGF/p75 complex. In terms of processing, asymmetrically arginine dimethylated at one site by host PRMT6. Methylation impairs the RNA-binding activity and export of viral RNA from the nucleus to the cytoplasm. Phosphorylated by protein kinase CK2. Presence of, and maybe binding to the N-terminus of the regulatory beta subunit of CK2 is necessary for CK2-mediated Rev's phosphorylation.

Its subcellular location is the host nucleus. It is found in the host nucleolus. The protein resides in the host cytoplasm. Functionally, escorts unspliced or incompletely spliced viral pre-mRNAs (late transcripts) out of the nucleus of infected cells. These pre-mRNAs carry a recognition sequence called Rev responsive element (RRE) located in the env gene, that is not present in fully spliced viral mRNAs (early transcripts). This function is essential since most viral proteins are translated from unspliced or partially spliced pre-mRNAs which cannot exit the nucleus by the pathway used by fully processed cellular mRNAs. Rev itself is translated from a fully spliced mRNA that readily exits the nucleus. Rev's nuclear localization signal (NLS) binds directly to KPNB1/Importin beta-1 without previous binding to KPNA1/Importin alpha-1. KPNB1 binds to the GDP bound form of RAN (Ran-GDP) and targets Rev to the nucleus. In the nucleus, the conversion from Ran-GDP to Ran-GTP dissociates Rev from KPNB1 and allows Rev's binding to the RRE in viral pre-mRNAs. Rev multimerization on the RRE via cooperative assembly exposes its nuclear export signal (NES) to the surface. Rev can then form a complex with XPO1/CRM1 and Ran-GTP, leading to nuclear export of the complex. Conversion from Ran-GTP to Ran-GDP mediates dissociation of the Rev/RRE/XPO1/RAN complex, so that Rev can return to the nucleus for a subsequent round of export. Beside KPNB1, also seems to interact with TNPO1/Transportin-1, RANBP5/IPO5 and IPO7/RANBP7 for nuclear import. The nucleoporin-like HRB/RIP is an essential cofactor that probably indirectly interacts with Rev to release HIV RNAs from the perinuclear region to the cytoplasm. This is Protein Rev from Homo sapiens (Human).